The primary structure comprises 280 residues: Protein YibA (280 aa).

The polypeptide is Protein YibA (yibA) (Escherichia coli O157:H7).